The sequence spans 142 residues: Small ribosomal subunit protein bS6 (142 aa).

The segment covering 110-133 (NKKPSHAKEKHEKTEHTHSHHTEE) has biased composition (basic and acidic residues). The segment at 110-142 (NKKPSHAKEKHEKTEHTHSHHTEETESVGSHSK) is disordered.

Belongs to the bacterial ribosomal protein bS6 family.

Functionally, binds together with bS18 to 16S ribosomal RNA. The protein is Small ribosomal subunit protein bS6 of Helicobacter pylori (strain Shi470).